Reading from the N-terminus, the 446-residue chain is Bifunctional protein GlmU (446 aa).

The interval 1–228 (MTKTAAVILA…AEELLGVNSR (228 aa)) is pyrophosphorylase. UDP-N-acetyl-alpha-D-glucosamine is bound by residues 9 to 12 (LAAG), K23, Q72, 77 to 78 (GT), 100 to 102 (YGD), G140, E154, N169, and N226. D102 is a Mg(2+) binding site. Position 226 (N226) interacts with Mg(2+). A linker region spans residues 229–249 (SELAAAEAVIQGRLREKAMEG). Residues 250–446 (GATLTAPETV…AHMRRLTGKN (197 aa)) are N-acetyltransferase. 2 residues coordinate UDP-N-acetyl-alpha-D-glucosamine: R315 and K333. Residue H345 is the Proton acceptor of the active site. Residues Y348 and N359 each coordinate UDP-N-acetyl-alpha-D-glucosamine. Acetyl-CoA-binding positions include A362, 368-369 (NY), S387, A405, and R422.

The protein in the N-terminal section; belongs to the N-acetylglucosamine-1-phosphate uridyltransferase family. In the C-terminal section; belongs to the transferase hexapeptide repeat family. As to quaternary structure, homotrimer. It depends on Mg(2+) as a cofactor.

Its subcellular location is the cytoplasm. It catalyses the reaction alpha-D-glucosamine 1-phosphate + acetyl-CoA = N-acetyl-alpha-D-glucosamine 1-phosphate + CoA + H(+). It carries out the reaction N-acetyl-alpha-D-glucosamine 1-phosphate + UTP + H(+) = UDP-N-acetyl-alpha-D-glucosamine + diphosphate. The protein operates within nucleotide-sugar biosynthesis; UDP-N-acetyl-alpha-D-glucosamine biosynthesis; N-acetyl-alpha-D-glucosamine 1-phosphate from alpha-D-glucosamine 6-phosphate (route II): step 2/2. It participates in nucleotide-sugar biosynthesis; UDP-N-acetyl-alpha-D-glucosamine biosynthesis; UDP-N-acetyl-alpha-D-glucosamine from N-acetyl-alpha-D-glucosamine 1-phosphate: step 1/1. Its pathway is bacterial outer membrane biogenesis; LPS lipid A biosynthesis. Catalyzes the last two sequential reactions in the de novo biosynthetic pathway for UDP-N-acetylglucosamine (UDP-GlcNAc). The C-terminal domain catalyzes the transfer of acetyl group from acetyl coenzyme A to glucosamine-1-phosphate (GlcN-1-P) to produce N-acetylglucosamine-1-phosphate (GlcNAc-1-P), which is converted into UDP-GlcNAc by the transfer of uridine 5-monophosphate (from uridine 5-triphosphate), a reaction catalyzed by the N-terminal domain. The sequence is that of Bifunctional protein GlmU from Rhodospirillum rubrum (strain ATCC 11170 / ATH 1.1.1 / DSM 467 / LMG 4362 / NCIMB 8255 / S1).